Consider the following 157-residue polypeptide: Probable succinate transporter subunit YjjB (157 aa).

4 consecutive transmembrane segments (helical) span residues 8–28, 55–75, 87–107, and 129–149; these read LALM…AMVF, AGFN…SIGI, VFTV…TAMI, and FLKA…PGLW.

The protein belongs to the ThrE exporter (TC 2.A.79) family. In terms of assembly, the transporter is composed of YjjB and YjjP.

The protein resides in the cell inner membrane. Functionally, involved in succinate export with YjjP. Both proteins are required for export. This chain is Probable succinate transporter subunit YjjB, found in Salmonella agona (strain SL483).